Reading from the N-terminus, the 132-residue chain is Subtelomeric hrmA-associated cluster protein AFUB_079000 (132 aa).

Functionally, part of the subtelomeric hrmA-associated cluster (HAC) containing genes that alter the hyphal surface (such as reduced total chitin or increased beta-glucan exposure) and perturb inter-hyphal interactions within the developing biofilms, resulting in a loss of vertically aligned polarized growing filaments. Consequently, this hypoxia-typic morphotype (called H-MORPH) with altered biofilm architecture leads to increased hypoxia fitness, increased host inflammation, rapid disease progression, and mortality in a murine model of invasive aspergillosis. This is Subtelomeric hrmA-associated cluster protein AFUB_079000 from Aspergillus fumigatus (strain CBS 144.89 / FGSC A1163 / CEA10) (Neosartorya fumigata).